A 136-amino-acid polypeptide reads, in one-letter code: Histone H3.1/H3.2 (136 aa).

The disordered stretch occupies residues 1-42 (MARTKQTARKSTGGKAPRKQLASKAARKAAPATGGVKKPHRY). Residue Lys-5 is modified to N6,N6,N6-trimethyllysine; alternate. Position 5 is an N6,N6-dimethyllysine; alternate (Lys-5). N6-methyllysine; alternate is present on residues Lys-5 and Lys-10. Lys-10 carries the N6-acetyllysine; alternate modification. Ser-11 is modified (phosphoserine). At Lys-15 the chain carries N6,N6-dimethyllysine; alternate. Lys-15, Lys-19, Lys-24, Lys-28, and Lys-37 each carry N6-acetyllysine; alternate. Residues Lys-19, Lys-24, Lys-28, and Lys-37 each carry the N6-methyllysine; alternate modification. The segment covering 19–32 (KQLASKAARKAAPA) has biased composition (low complexity). Lys-28 and Lys-37 each carry N6,N6,N6-trimethyllysine; alternate. Residues Lys-28 and Lys-37 each carry the N6,N6-dimethyllysine; alternate modification. Lys-57 and Lys-65 each carry N6-acetyllysine. Residue Lys-80 is modified to N6,N6,N6-trimethyllysine; alternate. The residue at position 80 (Lys-80) is an N6,N6-dimethyllysine; alternate. N6-methyllysine; alternate is present on Lys-80.

The protein belongs to the histone H3 family. The nucleosome is a histone octamer containing two molecules each of H2A, H2B, H3 and H4 assembled in one H3-H4 heterotetramer and two H2A-H2B heterodimers. The octamer wraps approximately 147 bp of DNA. Phosphorylated by ark1 to form H3S10ph in a cell cycle-dependent manner during mitosis and meiosis. H3S10ph is also formed by ssp2, promotes subsequent H3K14ac formation by gcn5, and is required for transcriptional activation through TBP recruitment to the promoters. Dephosphorylation is performed by sds21. In terms of processing, mono-, di- and trimethylated by the COMPASS complex to form H3K4me1/2/3. H3K4me activates gene expression by regulating transcription elongation and plays a role in telomere length maintenance. H3K4me enrichment correlates with transcription levels, and occurs in a 5' to 3' gradient with H3K4me3 enrichment at the 5'-end of genes, shifting to H3K4me2 and then H3K4me1. Methylated by clr4 to form H3K9me1. H3K9me1 represents a specific tag for epigenetic transcriptional repression by recruiting swi6/HP1 to methylated histones. Targeting to histone probably involves clr3 and rik1. Essential for silencing of centromeres and directional switching of the mating type. Methylated by set2 to form H3K36me. H3K36me represses gene expression. Methylated by dot1 to form H3K79me. H3K79me is required for association of SIR proteins with telomeric regions and for telomeric silencing. The COMPASS-mediated formation of H3K4me2/3 and the dot1-mediated formation of H3K79me require H2BK123ub1. Post-translationally, acetylation of histone H3 leads to transcriptional activation. H3K14ac formation by gcn5 is promoted by H3S10ph. H3K14ac can also be formed by esa1. H3K56ac formation occurs predominantly in newly synthesized H3 molecules during G1, S and G2/M of the cell cycle and may be involved in DNA repair.

The protein resides in the nucleus. The protein localises to the chromosome. Functionally, core component of nucleosome. Nucleosomes wrap and compact DNA into chromatin, limiting DNA accessibility to the cellular machineries which require DNA as a template. Histones thereby play a central role in transcription regulation, DNA repair, DNA replication and chromosomal stability. DNA accessibility is regulated via a complex set of post-translational modifications of histones, also called histone code, and nucleosome remodeling. The polypeptide is Histone H3.1/H3.2 (hht1) (Schizosaccharomyces pombe (strain 972 / ATCC 24843) (Fission yeast)).